A 592-amino-acid chain; its full sequence is A-type ATP synthase subunit A (592 aa).

Residue 231–238 (GGFGTGKT) coordinates ATP.

The protein belongs to the ATPase alpha/beta chains family. As to quaternary structure, has multiple subunits with at least A(3), B(3), C, D, E, F, H, I and proteolipid K(x).

It localises to the cell membrane. The catalysed reaction is ATP + H2O + 4 H(+)(in) = ADP + phosphate + 5 H(+)(out). Its function is as follows. Component of the A-type ATP synthase that produces ATP from ADP in the presence of a proton gradient across the membrane. The A chain is the catalytic subunit. This Staphylothermus marinus (strain ATCC 43588 / DSM 3639 / JCM 9404 / F1) protein is A-type ATP synthase subunit A.